The following is a 219-amino-acid chain: Large ribosomal subunit protein uL3 (219 aa).

This sequence belongs to the universal ribosomal protein uL3 family. Part of the 50S ribosomal subunit. Forms a cluster with proteins L14 and L19.

In terms of biological role, one of the primary rRNA binding proteins, it binds directly near the 3'-end of the 23S rRNA, where it nucleates assembly of the 50S subunit. This chain is Large ribosomal subunit protein uL3, found in Corynebacterium kroppenstedtii (strain DSM 44385 / JCM 11950 / CIP 105744 / CCUG 35717).